A 477-amino-acid polypeptide reads, in one-letter code: Exodeoxyribonuclease 7 large subunit (477 aa).

The interval 452–477 (KAAAAPKRVKKSPPPGTSGAQEDLFG) is disordered.

This sequence belongs to the XseA family. As to quaternary structure, heterooligomer composed of large and small subunits.

Its subcellular location is the cytoplasm. It catalyses the reaction Exonucleolytic cleavage in either 5'- to 3'- or 3'- to 5'-direction to yield nucleoside 5'-phosphates.. Functionally, bidirectionally degrades single-stranded DNA into large acid-insoluble oligonucleotides, which are then degraded further into small acid-soluble oligonucleotides. The polypeptide is Exodeoxyribonuclease 7 large subunit (Erythrobacter litoralis (strain HTCC2594)).